Consider the following 200-residue polypeptide: NADH-quinone oxidoreductase subunit C (200 aa).

The protein belongs to the complex I 30 kDa subunit family. NDH-1 is composed of 14 different subunits. Subunits NuoB, C, D, E, F, and G constitute the peripheral sector of the complex.

The protein localises to the cell inner membrane. The catalysed reaction is a quinone + NADH + 5 H(+)(in) = a quinol + NAD(+) + 4 H(+)(out). Its function is as follows. NDH-1 shuttles electrons from NADH, via FMN and iron-sulfur (Fe-S) centers, to quinones in the respiratory chain. The immediate electron acceptor for the enzyme in this species is believed to be ubiquinone. Couples the redox reaction to proton translocation (for every two electrons transferred, four hydrogen ions are translocated across the cytoplasmic membrane), and thus conserves the redox energy in a proton gradient. The sequence is that of NADH-quinone oxidoreductase subunit C from Agrobacterium fabrum (strain C58 / ATCC 33970) (Agrobacterium tumefaciens (strain C58)).